Reading from the N-terminus, the 208-residue chain is Ribosomal RNA large subunit methyltransferase E (208 aa).

Residues G63, W65, D83, D99, and D124 each contribute to the S-adenosyl-L-methionine site. The active-site Proton acceptor is K164.

This sequence belongs to the class I-like SAM-binding methyltransferase superfamily. RNA methyltransferase RlmE family.

The protein localises to the cytoplasm. It carries out the reaction uridine(2552) in 23S rRNA + S-adenosyl-L-methionine = 2'-O-methyluridine(2552) in 23S rRNA + S-adenosyl-L-homocysteine + H(+). Specifically methylates the uridine in position 2552 of 23S rRNA at the 2'-O position of the ribose in the fully assembled 50S ribosomal subunit. In Alcanivorax borkumensis (strain ATCC 700651 / DSM 11573 / NCIMB 13689 / SK2), this protein is Ribosomal RNA large subunit methyltransferase E.